Reading from the N-terminus, the 81-residue chain is Photosystem I iron-sulfur center (81 aa).

4Fe-4S ferredoxin-type domains lie at 1–31 and 39–68; these read MSHKVKIYDTCIGCTQCVRACPLDVLEMVPW and IASSPRTEDCVGCKRCETACPTDFLSIRVY. [4Fe-4S] cluster-binding residues include C11, C14, C17, C21, C48, C51, C54, and C58.

In terms of assembly, the cyanobacterial PSI reaction center is composed of one copy each of PsaA,B,C,D,E,F,I,J,K,L,M and X, and forms trimeric complexes. [4Fe-4S] cluster is required as a cofactor.

The protein resides in the cellular thylakoid membrane. It carries out the reaction reduced [plastocyanin] + hnu + oxidized [2Fe-2S]-[ferredoxin] = oxidized [plastocyanin] + reduced [2Fe-2S]-[ferredoxin]. Apoprotein for the two 4Fe-4S centers FA and FB of photosystem I (PSI); essential for photochemical activity. FB is the terminal electron acceptor of PSI, donating electrons to ferredoxin. The C-terminus interacts with PsaA/B/D and helps assemble the protein into the PSI complex. Required for binding of PsaD and PsaE to PSI. PSI is a plastocyanin/cytochrome c6-ferredoxin oxidoreductase, converting photonic excitation into a charge separation, which transfers an electron from the donor P700 chlorophyll pair to the spectroscopically characterized acceptors A0, A1, FX, FA and FB in turn. This Crocosphaera subtropica (strain ATCC 51142 / BH68) (Cyanothece sp. (strain ATCC 51142)) protein is Photosystem I iron-sulfur center.